Here is a 121-residue protein sequence, read N- to C-terminus: Holin-like protein CidA (121 aa).

The next 4 helical transmembrane spans lie at Trp3–Ile23, Pro30–Val50, Gly58–Ile78, and Ile89–Leu109.

This sequence belongs to the CidA/LrgA family. CidA subfamily.

It is found in the cell membrane. Functionally, increases the activity of extracellular murein hydrolases possibly by mediating their export via hole formation. Inhibited by the antiholin-like proteins LrgAB. In an unstressed cell, the LrgAB products probably inhibit the function of the CidA protein. When a cell is stressed by the addition of antibiotics or by other factors in the environment, CidA possibly oligomerizes within the bacterial cell membrane, creating lesions that disrupt the proton motive force, which in turn results in loss of cell viability. These lesions are also hypothesized to regulate the subsequent cell lysis by either allowing the murein hydrolases access to the cell wall substrate and/or regulating their activity by a possible change in the cell wall pH that results from loss of membrane potential. The polypeptide is Holin-like protein CidA (Bacillus cereus (strain ATCC 10987 / NRS 248)).